Consider the following 285-residue polypeptide: Phospholipid phosphatase 1 (285 aa).

The Cytoplasmic portion of the chain corresponds to 1–6 (MFDKTR). The short motif at 5 to 7 (TRL) is the PDZ-binding; involved in localization to the apical cell membrane element. The helical transmembrane segment at 7–27 (LPYVALDVLCVLLAGLPFAIL) threads the bilayer. The Extracellular portion of the chain corresponds to 28-53 (TSRHTPFQRGLFCNDESIKYPYKEDT). A helical transmembrane segment spans residues 54–74 (IPYPLLGGIIIPFSIIVMIVG). At 75-94 (ETLSVYFNLLHSNSFIRNNY) the chain is on the cytoplasmic side. The chain crosses the membrane as a helical span at residues 95-115 (IATIYKAIGTFLFGAAASQSL). The Extracellular portion of the chain corresponds to 116 to 164 (TDIAKYSIGRLRPHFLDVCDPDWSKINCSDGYIENYICRGNAQKVKEGR). The segment at 120-128 (KYSIGRLRP) is phosphatase sequence motif I. The N-linked (GlcNAc...) asparagine glycan is linked to Asn-142. Residues 165-185 (LSFYSGHSSFSMYCMLFVALY) traverse the membrane as a helical segment. The phosphatase sequence motif II stretch occupies residues 168–171 (YSGH). Catalysis depends on His-171, which acts as the Proton donors. Residues 186–196 (LQARMKGDWAR) are Cytoplasmic-facing. Residues 197–216 (LLRPTLQFGLVAVSIYVGLS) traverse the membrane as a helical segment. Positions 216 to 227 (SRVSDYKHHWSD) are phosphatase sequence motif III. Residues 217-229 (RVSDYKHHWSDVL) are Extracellular-facing. His-223 acts as the Nucleophile in catalysis. Residues 230 to 250 (TGLIQGALVAIVVAVYVSDFF) form a helical membrane-spanning segment. Over 251 to 285 (KERNSPFKERKEEDSHTTLHETPTTGNHYRNSHQP) the chain is Cytoplasmic. Residues 257–269 (FKERKEEDSHTTL) show a composition bias toward basic and acidic residues. Positions 257 to 285 (FKERKEEDSHTTLHETPTTGNHYRNSHQP) are disordered. The segment covering 270–285 (HETPTTGNHYRNSHQP) has biased composition (polar residues).

It belongs to the PA-phosphatase related phosphoesterase family. Forms functional homodimers and homooligomers that are not required for substrate recognition and catalytic activity. Can also form heterooligomers with PLPP2 and PLPP3. In terms of processing, N-glycosylated. N-linked sugars are of the complex type. N-glycosylation is not required for the phosphatase activity.

It is found in the cell membrane. The protein localises to the apical cell membrane. The protein resides in the membrane raft. It localises to the membrane. Its subcellular location is the caveola. The catalysed reaction is a 1,2-diacyl-sn-glycero-3-phosphate + H2O = a 1,2-diacyl-sn-glycerol + phosphate. It carries out the reaction 1,2-dihexadecanoyl-sn-glycero-3-phosphate + H2O = 1,2-dihexadecanoyl-sn-glycerol + phosphate. The enzyme catalyses 1,2-di-(9Z-octadecenoyl)-sn-glycero-3-phosphate + H2O = 1,2-di-(9Z-octadecenoyl)-sn-glycerol + phosphate. It catalyses the reaction a monoacyl-sn-glycero-3-phosphate + H2O = a monoacylglycerol + phosphate. The catalysed reaction is (9Z)-octadecenoyl-sn-glycero-3-phosphate + H2O = (9Z-octadecenoyl)-glycerol + phosphate. It carries out the reaction a 1-acyl-sn-glycero-3-phosphate + H2O = a 1-acyl-sn-glycerol + phosphate. The enzyme catalyses 1-(9Z-octadecenoyl)-sn-glycero-3-phosphate + H2O = 1-(9Z-octadecenoyl)-sn-glycerol + phosphate. It catalyses the reaction a 1,2-diacyl-sn-glycerol 3-diphosphate + H2O = a 1,2-diacyl-sn-glycero-3-phosphate + phosphate + H(+). The catalysed reaction is sphing-4-enine 1-phosphate + H2O = sphing-4-enine + phosphate. It carries out the reaction an N-acylsphing-4-enine 1-phosphate + H2O = an N-acylsphing-4-enine + phosphate. The enzyme catalyses N-(octanoyl)-sphing-4-enine-1-phosphate + H2O = N-octanoylsphing-4-enine + phosphate. It catalyses the reaction N-(9Z-octadecenoyl)-ethanolamine phosphate + H2O = N-(9Z-octadecenoyl) ethanolamine + phosphate. The catalysed reaction is 1-hexadecanoyl-2-(9Z-octadecenoyl)-sn-glycero-3-phosphate + H2O = 1-hexadecanoyl-2-(9Z-octadecenoyl)-sn-glycerol + phosphate. It functions in the pathway lipid metabolism; phospholipid metabolism. Magnesium-independent phospholipid phosphatase. Insensitive to N-ethylmaleimide. In terms of biological role, magnesium-independent phospholipid phosphatase of the plasma membrane that catalyzes the dephosphorylation of a variety of glycerolipid and sphingolipid phosphate esters including phosphatidate/PA, lysophosphatidate/LPA, diacylglycerol pyrophosphate/DGPP, sphingosine 1-phosphate/S1P and ceramide 1-phosphate/C1P. Also acts on N-oleoyl ethanolamine phosphate/N-(9Z-octadecenoyl)-ethanolamine phosphate, a potential physiological compound. Through its extracellular phosphatase activity allows both the hydrolysis and the cellular uptake of these bioactive lipid mediators from the milieu, regulating signal transduction in different cellular processes. It is for instance essential for the extracellular hydrolysis of S1P and subsequent conversion into intracellular S1P. Involved in the regulation of inflammation, platelets activation, cell proliferation and migration among other processes. May also have an intracellular activity to regulate phospholipid-mediated signaling pathways. The polypeptide is Phospholipid phosphatase 1 (Sus scrofa (Pig)).